An 88-amino-acid polypeptide reads, in one-letter code: Phosphocarrier protein HPr (88 aa).

Residues 1–88 (MASKEFHIVA…ETMTKEGLAE (88 aa)) enclose the HPr domain. The active-site Pros-phosphohistidine intermediate is histidine 15. Serine 46 carries the phosphoserine; by HPrK/P modification.

It belongs to the HPr family.

The protein resides in the cytoplasm. With respect to regulation, phosphorylation on Ser-46 inhibits the phosphoryl transfer from enzyme I to HPr. General (non sugar-specific) component of the phosphoenolpyruvate-dependent sugar phosphotransferase system (sugar PTS). This major carbohydrate active-transport system catalyzes the phosphorylation of incoming sugar substrates concomitantly with their translocation across the cell membrane. The phosphoryl group from phosphoenolpyruvate (PEP) is transferred to the phosphoryl carrier protein HPr by enzyme I. Phospho-HPr then transfers it to the PTS EIIA domain. Its function is as follows. P-Ser-HPr interacts with the catabolite control protein A (CcpA), forming a complex that binds to DNA at the catabolite response elements cre, operator sites preceding a large number of catabolite-regulated genes. Thus, P-Ser-HPr is a corepressor in carbon catabolite repression (CCR), a mechanism that allows bacteria to coordinate and optimize the utilization of available carbon sources. P-Ser-HPr also plays a role in inducer exclusion, in which it probably interacts with several non-PTS permeases and inhibits their transport activity. The chain is Phosphocarrier protein HPr (ptsH) from Lactococcus lactis subsp. cremoris (Streptococcus cremoris).